A 290-amino-acid polypeptide reads, in one-letter code: 4-diphosphocytidyl-2-C-methyl-D-erythritol kinase (290 aa).

Lys-13 is a catalytic residue. 96-106 lines the ATP pocket; sequence PMGGGIGGGSS. The active site involves Asp-138.

It belongs to the GHMP kinase family. IspE subfamily.

The catalysed reaction is 4-CDP-2-C-methyl-D-erythritol + ATP = 4-CDP-2-C-methyl-D-erythritol 2-phosphate + ADP + H(+). The protein operates within isoprenoid biosynthesis; isopentenyl diphosphate biosynthesis via DXP pathway; isopentenyl diphosphate from 1-deoxy-D-xylulose 5-phosphate: step 3/6. Functionally, catalyzes the phosphorylation of the position 2 hydroxy group of 4-diphosphocytidyl-2C-methyl-D-erythritol. The polypeptide is 4-diphosphocytidyl-2-C-methyl-D-erythritol kinase (Vibrio vulnificus (strain CMCP6)).